Consider the following 89-residue polypeptide: Cell division topological specificity factor (89 aa).

It belongs to the MinE family.

In terms of biological role, prevents the cell division inhibition by proteins MinC and MinD at internal division sites while permitting inhibition at polar sites. This ensures cell division at the proper site by restricting the formation of a division septum at the midpoint of the long axis of the cell. This chain is Cell division topological specificity factor, found in Clostridium beijerinckii (strain ATCC 51743 / NCIMB 8052) (Clostridium acetobutylicum).